Here is a 505-residue protein sequence, read N- to C-terminus: Phosphomevalonate kinase, peroxisomal (505 aa).

Residue Ala-2 is modified to N-acetylalanine. The short motif at Asp-57–Leu-65 is the Peroxisomal targeting signal PTS2 element. Val-177–Ala-187 serves as a coordination point for ATP.

Belongs to the GHMP kinase family. Mevalonate kinase subfamily.

The protein localises to the peroxisome. The catalysed reaction is (R)-5-phosphomevalonate + ATP = (R)-5-diphosphomevalonate + ADP. Its pathway is isoprenoid biosynthesis; isopentenyl diphosphate biosynthesis via mevalonate pathway; isopentenyl diphosphate from (R)-mevalonate: step 2/3. In Arabidopsis thaliana (Mouse-ear cress), this protein is Phosphomevalonate kinase, peroxisomal.